A 145-amino-acid polypeptide reads, in one-letter code: Bacilliredoxin MW1318 (145 aa).

Belongs to the bacilliredoxin family.

In Staphylococcus aureus (strain MW2), this protein is Bacilliredoxin MW1318.